The sequence spans 82 residues: Exodeoxyribonuclease 7 small subunit (82 aa).

It belongs to the XseB family. As to quaternary structure, heterooligomer composed of large and small subunits.

It localises to the cytoplasm. The enzyme catalyses Exonucleolytic cleavage in either 5'- to 3'- or 3'- to 5'-direction to yield nucleoside 5'-phosphates.. In terms of biological role, bidirectionally degrades single-stranded DNA into large acid-insoluble oligonucleotides, which are then degraded further into small acid-soluble oligonucleotides. This Pectobacterium carotovorum subsp. carotovorum (strain PC1) protein is Exodeoxyribonuclease 7 small subunit.